Reading from the N-terminus, the 555-residue chain is MWREAMMELLDQLEAENPEDPALAPKDLSEWACIYIKYLQIMRKLETAYDQMVHPQKRQDMRKALEACIGRMLEIRHWMVKLNRGLDFINLDDILVDLKLGPEVLEVPVPKYFIEDRAKELDDRDKFLEALIEKYNVKGPAASPIIRIGAPLGEDEAILMIQKNERGRQARERARLAAITKRQRQIEDRRVRLGVTLSHEEAARKIQAAIRGFLWRRRIKKEADKELMFIGMKPKPRDPKRDPQMGEAKNLMRRKRVQLEHGREYDEAIVNLKGKVRELEGQDMRETIQDKVNAWFVEKRNPDTGEYPDFPDPDDGGSRAILNPPPPSLASLLEDAAGDGKGKGKDGKGDAKKDAKKDPKKDKKGGGDEPQAEEQKIGAVFIPAIEAAVQEFVAKWQDRDEADNFHQKYDAELVKDELRPIVFEEIRLQVDGEMRVLLQNLKDLVEAERAAKLGKKGKKKKGKKKEPFSRIKKELLKEAKTLAPGERVLVLGNSREPYLCAKKDEKDAAGDGKGKGKDGKGGGKPGTAGSKPGTADKKKKGGKKKSLCSDWSCGA.

IQ domains follow at residues 154 to 183 (EDEA…TKRQ) and 199 to 226 (HEEA…ADKE). Disordered stretches follow at residues 232–255 (MKPK…MRRK), 299–377 (KRNP…EQKI), 450–469 (AAKL…EPFS), and 501–555 (AKKD…SCGA). Basic and acidic residues-rich tracts occupy residues 235–244 (KPRDPKRDPQ) and 338–367 (GDGK…KGGG). The segment covering 452–464 (KLGKKGKKKKGKK) has biased composition (basic residues). The span at 501-521 (AKKDEKDAAGDGKGKGKDGKG) shows a compositional bias: basic and acidic residues. Over residues 537 to 546 (KKKKGGKKKS) the composition is skewed to basic residues.

Belongs to the AAA ATPase family. DRC11 subfamily. Component of the nexin-dynein regulatory complex (N-DRC). Interacts with DRC5.

The protein resides in the cytoplasm. Its subcellular location is the cytoskeleton. The protein localises to the flagellum axoneme. Component of the nexin-dynein regulatory complex (N-DRC), a key regulator of ciliary/flagellar motility which maintains the alignment and integrity of the distal axoneme and regulates microtubule sliding in motile axonemes. This Chlamydomonas reinhardtii (Chlamydomonas smithii) protein is Dynein regulatory complex protein 11.